The following is a 672-amino-acid chain: Zinc finger and BTB domain-containing protein 24 (672 aa).

The BTB domain occupies 39–105 (CDITLIVEDV…MYSAVVLVDE (67 aa)). Residues 136–208 (HMQVKRKRGR…GKRKIKQPIR (73 aa)) form a disordered region. The segment at residues 140–152 (KRKRGRPKKNQDL) is a DNA-binding region (a.T hook 1). Basic and acidic residues predominate over residues 148–158 (KNQDLSQKENP). The segment covering 160–171 (SELQAQTSSEIQ) has biased composition (polar residues). Residues 198–208 (EGKRKIKQPIR) show a composition bias toward basic residues. A DNA-binding region (a.T hook 2) is located at residues 223–235 (PGKRGRRRKYPDT). 8 consecutive C2H2-type zinc fingers follow at residues 237–259 (ARCEECGKVFKSHLFLKIHQRTH), 265–287 (FRCSVCGKEFTQKHTLLVHQRMH), 293–315 (YICTVCSKALSTKHSLLEHMNLH), 321–343 (FTCEECGKSFSQQRQLKSHNRVH), 349–371 (PECAECHHKFMDAAQLKKHLRTH), 377–399 (FTCEICGKCFTAKSTLQTHIRIH), 405–427 (YVCKVCDKTFSDPSARRRHEVSH), and 433–455 (FSCSICKVSFARKDNLKAHIKTH). Residues 453–492 (KTHNKENPPAQAESTDKPPQSAPEQQEQEQQQQQQTSGDK) are disordered. The span at 476–487 (EQQEQEQQQQQQ) shows a compositional bias: low complexity.

The protein belongs to the krueppel C2H2-type zinc-finger protein family.

It is found in the nucleus. Its function is as follows. May be involved in BMP2-induced transcription. The sequence is that of Zinc finger and BTB domain-containing protein 24 (zbtb24) from Danio rerio (Zebrafish).